We begin with the raw amino-acid sequence, 443 residues long: Trigger factor (443 aa).

One can recognise a PPIase FKBP-type domain in the interval 164 to 249; the sequence is GDVLCVDFVG…AKSLKKAVDP (86 aa).

The protein belongs to the FKBP-type PPIase family. Tig subfamily.

The protein resides in the cytoplasm. The enzyme catalyses [protein]-peptidylproline (omega=180) = [protein]-peptidylproline (omega=0). Functionally, involved in protein export. Acts as a chaperone by maintaining the newly synthesized protein in an open conformation. Functions as a peptidyl-prolyl cis-trans isomerase. The protein is Trigger factor of Gluconobacter oxydans (strain 621H) (Gluconobacter suboxydans).